Here is a 319-residue protein sequence, read N- to C-terminus: Ribonuclease Z (319 aa).

Zn(2+) contacts are provided by H62, H64, D66, H67, H145, D216, and H274. Catalysis depends on D66, which acts as the Proton acceptor.

This sequence belongs to the RNase Z family. Homodimer. It depends on Zn(2+) as a cofactor.

It catalyses the reaction Endonucleolytic cleavage of RNA, removing extra 3' nucleotides from tRNA precursor, generating 3' termini of tRNAs. A 3'-hydroxy group is left at the tRNA terminus and a 5'-phosphoryl group is left at the trailer molecule.. In terms of biological role, zinc phosphodiesterase, which displays some tRNA 3'-processing endonuclease activity. Probably involved in tRNA maturation, by removing a 3'-trailer from precursor tRNA. The chain is Ribonuclease Z from Synechococcus sp. (strain CC9605).